The chain runs to 207 residues: Peptidyl-tRNA hydrolase (207 aa).

Position 19 (Tyr-19) interacts with tRNA. His-24 functions as the Proton acceptor in the catalytic mechanism. TRNA is bound by residues Phe-70, Asn-72, and Asn-118.

This sequence belongs to the PTH family. As to quaternary structure, monomer.

It localises to the cytoplasm. The enzyme catalyses an N-acyl-L-alpha-aminoacyl-tRNA + H2O = an N-acyl-L-amino acid + a tRNA + H(+). Hydrolyzes ribosome-free peptidyl-tRNAs (with 1 or more amino acids incorporated), which drop off the ribosome during protein synthesis, or as a result of ribosome stalling. In terms of biological role, catalyzes the release of premature peptidyl moieties from peptidyl-tRNA molecules trapped in stalled 50S ribosomal subunits, and thus maintains levels of free tRNAs and 50S ribosomes. The protein is Peptidyl-tRNA hydrolase of Synechococcus sp. (strain CC9311).